A 271-amino-acid polypeptide reads, in one-letter code: Enolase-phosphatase E1 (271 aa).

Positions 18 and 20 each coordinate Mg(2+). Substrate contacts are provided by residues 144–145 (SS) and Lys-194. Asp-221 contributes to the Mg(2+) binding site.

This sequence belongs to the HAD-like hydrolase superfamily. MasA/MtnC family. Monomer. Requires Mg(2+) as cofactor.

The protein localises to the cytoplasm. It is found in the nucleus. The enzyme catalyses 5-methylsulfanyl-2,3-dioxopentyl phosphate + H2O = 1,2-dihydroxy-5-(methylsulfanyl)pent-1-en-3-one + phosphate. The protein operates within amino-acid biosynthesis; L-methionine biosynthesis via salvage pathway; L-methionine from S-methyl-5-thio-alpha-D-ribose 1-phosphate: step 3/6. Its pathway is amino-acid biosynthesis; L-methionine biosynthesis via salvage pathway; L-methionine from S-methyl-5-thio-alpha-D-ribose 1-phosphate: step 4/6. In terms of biological role, bifunctional enzyme that catalyzes the enolization of 2,3-diketo-5-methylthiopentyl-1-phosphate (DK-MTP-1-P) into the intermediate 2-hydroxy-3-keto-5-methylthiopentenyl-1-phosphate (HK-MTPenyl-1-P), which is then dephosphorylated to form the acireductone 1,2-dihydroxy-3-keto-5-methylthiopentene (DHK-MTPene). The chain is Enolase-phosphatase E1 from Candida albicans (strain WO-1) (Yeast).